The primary structure comprises 165 residues: Thiol peroxidase (165 aa).

One can recognise a Thioredoxin domain in the interval 18 to 164; it reads RKVGDKAPNF…YEAAIEAAKK (147 aa). Cys-60 acts as the Cysteine sulfenic acid (-SOH) intermediate in catalysis. Cys-60 and Cys-94 are joined by a disulfide.

The protein belongs to the peroxiredoxin family. Tpx subfamily. Homodimer.

The enzyme catalyses a hydroperoxide + [thioredoxin]-dithiol = an alcohol + [thioredoxin]-disulfide + H2O. In terms of biological role, thiol-specific peroxidase that catalyzes the reduction of hydrogen peroxide and organic hydroperoxides to water and alcohols, respectively. Plays a role in cell protection against oxidative stress by detoxifying peroxides. The sequence is that of Thiol peroxidase from Listeria monocytogenes serovar 1/2a (strain ATCC BAA-679 / EGD-e).